The following is an 880-amino-acid chain: Potassium transport protein 2 (880 aa).

A glycan (N-linked (GlcNAc...) asparagine) is linked at asparagine 9. Transmembrane regions (helical) follow at residues 28–48 (FVQD…LYGS) and 84–104 (TILL…LTLF). Residues 157 to 182 (MHRPVAPETKAEEAEHQENEKHHRHH) are disordered. Residues 165–177 (TKAEEAEHQENEK) are compositionally biased toward basic and acidic residues. 7 N-linked (GlcNAc...) asparagine glycosylation sites follow: asparagine 239, asparagine 283, asparagine 293, asparagine 294, asparagine 321, asparagine 443, and asparagine 460. The span at 289–315 (HHLDNNSSISSHNPSLETANDGNQETV) shows a compositional bias: polar residues. Residues 289–344 (HHLDNNSSISSHNPSLETANDGNQETVSSSNSNYSTTRVDNDPHVASYSPQNSNFD) are disordered. Over residues 316 to 325 (SSSNSNYSTT) the composition is skewed to low complexity. The next 6 helical transmembrane spans lie at 494–514 (ILVV…LIFI), 571–591 (LIFL…WIMI), 625–645 (WVLF…FMVL), 684–704 (IAPA…YPIA), 756–776 (QLSH…IVEG), and 787–807 (FTLF…GLSL). The tract at residues 857 to 880 (REEEDYMRRHGKKNTNRADPVPSS) is disordered.

Belongs to the TrkH potassium transport family.

The protein resides in the cell membrane. In terms of biological role, together with TRK1, defines the major, high-affinity potassium influx transport system. Involved in maintenance of the proper sodium/potassium ratio in the cell and in regulating the plasma membrane potential. The sequence is that of Potassium transport protein 2 (trk2) from Schizosaccharomyces pombe (strain 972 / ATCC 24843) (Fission yeast).